The chain runs to 469 residues: Argininosuccinate lyase (469 aa).

This sequence belongs to the lyase 1 family. Argininosuccinate lyase subfamily.

Its subcellular location is the cytoplasm. The enzyme catalyses 2-(N(omega)-L-arginino)succinate = fumarate + L-arginine. Its pathway is amino-acid biosynthesis; L-arginine biosynthesis; L-arginine from L-ornithine and carbamoyl phosphate: step 3/3. This chain is Argininosuccinate lyase, found in Paracoccus denitrificans (strain Pd 1222).